The chain runs to 910 residues: MSLPLTEEQRKKIEENRQKALARRAEKLSEQPQSAASGSSAAGPSQSKQGSLLNLLAEPSKPVGHASIFKQQNLSNSFPTDQRPHSSRCSQPSPAEETTGLWKTQGEMSTACPKPNPSPPGASNQPLLGYKSSEGQPQATWDTGASSSGPFPRDPELEAKAARPSTSRQSISDSFYVLGGKTPRTEGRPPNILQTTPQNTGFLRGACIKTGDRFRVKIGYNQELIAVFKSLPSRHYDSFTKTWDFSMSDYRALMKAVERLSTVSLKPLDEAGGSVGGQTSLPSAPSLTFVTGKCMLISRVRFEVDIGYSEAVIGLFKQMESRSYDIKTRKWSFLLEEHNKLIARSRELKQVQLDPLPKTVTLAFASQLEKTSPKLKADVPEADLSGVDAKLVSSLMPFQREGVSFAISKRGRLLLADDMGLGKTVQAICIAAFYRKEWPLLVVVPSSVRFTWEQAFLRWLPSLSPENINVVVTGKGRLTAGLVNIVSFDLLCKLERQLKTPFKVVIIDESHFLKNIKTARCRAAVPILKVAKRVILLSGTPAMSRPAELYTQIIAVKPTFFPQFHAFGLRYCDAKRLPWGWDYSGSSNLGELKLLLEEAIMLRRLKSDVLSQLPAKQRKMVVVNPGRISSRAKAALDAAAKEMTKDKTKQQQKEALLVFFNRTAEAKIPCVVEYILDLLDSGREKFLVFAHHKVILDAVAKELERKNVQHIRIDGSTPSADREAQCQRFQLSKGHTVALLSITAANMGLTFSTADLVVFAELFWNPGVLIQAEDRVHRIGQTNSVSIHYLVAKGTADDYLWPLIQEKIKVLGEAGLSETNFSEMTEATDYVHKDPKQKTIYDLFQQSFEDDGNDMEFLEAAESFELGSTSGTSGNISQDLGDLLDEDEGSPPKKSRFEFFDNWDSFSSPF.

Positions 1–198 (MSLPLTEEQR…PPNILQTTPQ (198 aa)) are disordered. Ser2 bears the N-acetylserine mark. Mediates interaction with RPA2 regions lie at residues 2–29 (SLPLTEEQRKKIEENRQKALARRAEKLS) and 5–29 (LTEEQRKKIEENRQKALARRAEKLS). The stretch at 3–34 (LPLTEEQRKKIEENRQKALARRAEKLSEQPQS) forms a coiled coil. The segment covering 7-29 (EEQRKKIEENRQKALARRAEKLS) has biased composition (basic and acidic residues). The span at 31 to 51 (QPQSAASGSSAAGPSQSKQGS) shows a compositional bias: low complexity. The segment covering 69–80 (FKQQNLSNSFPT) has biased composition (polar residues). Ser118 carries the post-translational modification Phosphoserine. 2 stretches are compositionally biased toward polar residues: residues 133-149 (SEGQPQATWDTGASSSG) and 164-173 (PSTSRQSISD). Ser165 is subject to Phosphoserine. HARP domains lie at 199–269 (NTGF…KPLD) and 286–357 (SLTF…DPLP). A Helicase ATP-binding domain is found at 404-559 (SFAISKRGRL…YTQIIAVKPT (156 aa)). Residue 417 to 424 (DDMGLGKT) participates in ATP binding. The DESH box motif lies at 508 to 511 (DESH). The short motif at 603–620 (RRLKSDVLSQLPAKQRKM) is the Nuclear localization signal element. The Helicase C-terminal domain maps to 674–827 (YILDLLDSGR…ETNFSEMTEA (154 aa)). Residues 868–878 (STSGTSGNISQ) are compositionally biased toward polar residues. Positions 868–896 (STSGTSGNISQDLGDLLDEDEGSPPKKSR) are disordered.

The protein belongs to the SNF2/RAD54 helicase family. SMARCAL1 subfamily. Interacts with RPA2; the interaction is direct and mediates the recruitment by the RPA complex of SMARCAL1 to sites of DNA damage. Post-translationally, DNA damage-regulated phosphorylation by kinases that may include ATM, ATR and PRKDC. In terms of tissue distribution, ubiquitously expressed, with high levels in brain, heart, kidney, liver and testis.

It localises to the nucleus. It catalyses the reaction ATP + H2O = ADP + phosphate + H(+). Functionally, ATP-dependent annealing helicase that binds selectively to fork DNA relative to ssDNA or dsDNA and catalyzes the rewinding of the stably unwound DNA. Rewinds single-stranded DNA bubbles that are stably bound by replication protein A (RPA). Acts throughout the genome to reanneal stably unwound DNA, performing the opposite reaction of many enzymes, such as helicases and polymerases, that unwind DNA. May play an important role in DNA damage response by acting at stalled replication forks. The polypeptide is SWI/SNF-related matrix-associated actin-dependent regulator of chromatin subfamily A-like protein 1 (Smarcal1) (Mus musculus (Mouse)).